Consider the following 151-residue polypeptide: Copper transporter 3 (151 aa).

2 helical membrane-spanning segments follow: residues 52 to 72 (LKMYWVCLAVIFVISAFSECL) and 103 to 123 (YLVMLAVMSFNGGVFVAAMAG).

Belongs to the copper transporter (Ctr) (TC 1.A.56) family. SLC31A subfamily. Highly expressed in stems and at lower levels in leaves and flowers.

The protein localises to the membrane. In terms of biological role, involved in the transport of copper. This chain is Copper transporter 3 (COPT3), found in Arabidopsis thaliana (Mouse-ear cress).